Consider the following 294-residue polypeptide: Large ribosomal subunit protein uL18 (294 aa).

Positions 247 to 275 (RADPSPSAKKAAKPSKRHTAKRLTYDERK) are disordered. Positions 256 to 267 (KAAKPSKRHTAK) are enriched in basic residues.

This sequence belongs to the universal ribosomal protein uL18 family. As to quaternary structure, component of the large ribosomal subunit (LSU).

It localises to the cytoplasm. Its subcellular location is the nucleus. Its function is as follows. Component of the ribosome, a large ribonucleoprotein complex responsible for the synthesis of proteins in the cell. The small ribosomal subunit (SSU) binds messenger RNAs (mRNAs) and translates the encoded message by selecting cognate aminoacyl-transfer RNA (tRNA) molecules. The large subunit (LSU) contains the ribosomal catalytic site termed the peptidyl transferase center (PTC), which catalyzes the formation of peptide bonds, thereby polymerizing the amino acids delivered by tRNAs into a polypeptide chain. The nascent polypeptides leave the ribosome through a tunnel in the LSU and interact with protein factors that function in enzymatic processing, targeting, and the membrane insertion of nascent chains at the exit of the ribosomal tunnel. This is Large ribosomal subunit protein uL18 (rpl-5) from Caenorhabditis briggsae.